A 393-amino-acid chain; its full sequence is NAD(P)H-quinone oxidoreductase subunit H, chloroplastic (393 aa).

Belongs to the complex I 49 kDa subunit family. As to quaternary structure, NDH is composed of at least 16 different subunits, 5 of which are encoded in the nucleus.

It is found in the plastid. Its subcellular location is the chloroplast thylakoid membrane. The catalysed reaction is a plastoquinone + NADH + (n+1) H(+)(in) = a plastoquinol + NAD(+) + n H(+)(out). It catalyses the reaction a plastoquinone + NADPH + (n+1) H(+)(in) = a plastoquinol + NADP(+) + n H(+)(out). Functionally, NDH shuttles electrons from NAD(P)H:plastoquinone, via FMN and iron-sulfur (Fe-S) centers, to quinones in the photosynthetic chain and possibly in a chloroplast respiratory chain. The immediate electron acceptor for the enzyme in this species is believed to be plastoquinone. Couples the redox reaction to proton translocation, and thus conserves the redox energy in a proton gradient. The sequence is that of NAD(P)H-quinone oxidoreductase subunit H, chloroplastic from Saccharum hybrid (Sugarcane).